Consider the following 269-residue polypeptide: Phosphatidylglycerol--prolipoprotein diacylglyceryl transferase (269 aa).

7 consecutive transmembrane segments (helical) span residues 10 to 30 (VALA…LIGI), 56 to 76 (MVFW…VLFY), 92 to 112 (WKGG…AWWF), 120 to 140 (FFEL…AGRI), 174 to 194 (PSQL…LWLF), 202 to 222 (MAVS…VEFV), and 237 to 257 (LTMG…LIWL). A 1,2-diacyl-sn-glycero-3-phospho-(1'-sn-glycerol) is bound at residue arginine 139.

Belongs to the Lgt family.

The protein localises to the cell inner membrane. It carries out the reaction L-cysteinyl-[prolipoprotein] + a 1,2-diacyl-sn-glycero-3-phospho-(1'-sn-glycerol) = an S-1,2-diacyl-sn-glyceryl-L-cysteinyl-[prolipoprotein] + sn-glycerol 1-phosphate + H(+). The protein operates within protein modification; lipoprotein biosynthesis (diacylglyceryl transfer). Catalyzes the transfer of the diacylglyceryl group from phosphatidylglycerol to the sulfhydryl group of the N-terminal cysteine of a prolipoprotein, the first step in the formation of mature lipoproteins. This Pseudomonas fluorescens (strain ATCC BAA-477 / NRRL B-23932 / Pf-5) protein is Phosphatidylglycerol--prolipoprotein diacylglyceryl transferase.